The sequence spans 827 residues: Disintegrin and metalloproteinase domain-containing protein 17 (827 aa).

Residues M1–A17 form the signal peptide. Positions P18–R214 are excised as a propeptide. An N-linked (GlcNAc...) asparagine glycan is attached at N157. The Cysteine switch signature appears at K182 to A189. Residue C184 participates in Zn(2+) binding. Over R215–N671 the chain is Extracellular. A Peptidase M12B domain is found at N223–S474. Disulfide bonds link C225–C333, C365–C469, and C423–C453. A glycan (N-linked (GlcNAc...) asparagine) is linked at N264. H405 serves as a coordination point for Zn(2+). The active site involves E406. Zn(2+) is bound by residues H409 and H415. N-linked (GlcNAc...) asparagine glycans are attached at residues N452, N498, N539, and N551. A Disintegrin domain is found at N475–D563. Disulfide bonds link C534–C555, C573–C582, C578–C591, and C593–C600. The tract at residues C603–N671 is crambin-like. N-linked (GlcNAc...) asparagine glycosylation occurs at N606. A helical membrane pass occupies residues I672 to H692. Residues C693–C827 lie on the Cytoplasmic side of the membrane. The SH3-binding motif lies at P731–R738. T735 carries the post-translational modification Phosphothreonine; by MAPK14. At T764 the chain carries Phosphothreonine. Positions Q766–C827 are disordered. S770 bears the Phosphoserine mark. Basic and acidic residues-rich tracts occupy residues T771–P784, S794–A810, and S818–C827. S794 and S822 each carry phosphoserine.

In terms of assembly, interacts with MAD2L1, MAPK14 and MUC1. Interacts with iRhom1/RHBDF1 and iRhom2/RHBDF2. Interacts with FRMD8 via its interaction with iRhom1/RHBDF1 and iRhom2/RHBDF2. Interacts with TSPAN8. It depends on Zn(2+) as a cofactor. The precursor is cleaved by a furin endopeptidase. In terms of processing, phosphorylated. Stimulation by growth factor or phorbol 12-myristate 13-acetate induces phosphorylation of Ser-822 but decreases phosphorylation of Ser-794. Phosphorylation at Thr-735 by MAPK14 is required for ADAM17-mediated ectodomain shedding.

The protein resides in the membrane. It catalyses the reaction Narrow endopeptidase specificity. Cleaves Pro-Leu-Ala-Gln-Ala-|-Val-Arg-Ser-Ser-Ser in the membrane-bound, 26-kDa form of tumor necrosis factor alpha (TNFalpha). Similarly cleaves other membrane-anchored, cell-surface proteins to 'shed' the extracellular domains.. Transmembrane metalloprotease which mediates the ectodomain shedding of a myriad of transmembrane proteins including adhesion proteins, growth factor precursors and cytokines important for inflammation and immunity. Cleaves the membrane-bound precursor of TNF-alpha to its mature soluble form. Responsible for the proteolytical release of soluble JAM3 from endothelial cells surface. Responsible for the proteolytic release of several other cell-surface proteins, including p75 TNF-receptor, interleukin 1 receptor type II, p55 TNF-receptor, transforming growth factor-alpha, L-selectin, growth hormone receptor, MUC1 and the amyloid precursor protein. Acts as an activator of Notch pathway by mediating cleavage of Notch, generating the membrane-associated intermediate fragment called Notch extracellular truncation (NEXT). Plays a role in the proteolytic processing of ACE2. Plays a role in hemostasis through shedding of GP1BA, the platelet glycoprotein Ib alpha chain. Mediates the proteolytic cleavage of LAG3, leading to release the secreted form of LAG3. Mediates the proteolytic cleavage of IL6R, leading to the release of secreted form of IL6R. Mediates the proteolytic cleavage and shedding of FCGR3A upon NK cell stimulation, a mechanism that allows for increased NK cell motility and detachment from opsonized target cells. Cleaves TREM2, resulting in shedding of the TREM2 ectodomain. This is Disintegrin and metalloproteinase domain-containing protein 17 (Adam17) from Rattus norvegicus (Rat).